Reading from the N-terminus, the 333-residue chain is Ornithine carbamoyltransferase (333 aa).

Residues 56-59 (STRT), Arg-107, and 134-137 (HPTQ) contribute to the carbamoyl phosphate site. Residues Asn-167, Asp-231, and 235 to 236 (SM) each bind L-ornithine. Residues 273–274 (CL) and Arg-318 contribute to the carbamoyl phosphate site.

Belongs to the aspartate/ornithine carbamoyltransferase superfamily. OTCase family.

It localises to the cytoplasm. It catalyses the reaction carbamoyl phosphate + L-ornithine = L-citrulline + phosphate + H(+). The protein operates within amino-acid degradation; L-arginine degradation via ADI pathway; carbamoyl phosphate from L-arginine: step 2/2. Functionally, reversibly catalyzes the transfer of the carbamoyl group from carbamoyl phosphate (CP) to the N(epsilon) atom of ornithine (ORN) to produce L-citrulline. The chain is Ornithine carbamoyltransferase from Clostridium botulinum (strain 657 / Type Ba4).